The sequence spans 283 residues: NAD kinase (283 aa).

Aspartate 66 (proton acceptor) is an active-site residue. NAD(+) is bound by residues 66 to 67, 137 to 138, arginine 165, aspartate 167, and 178 to 183; these read DG, ND, and TGYSLS.

The protein belongs to the NAD kinase family. A divalent metal cation is required as a cofactor.

Its subcellular location is the cytoplasm. The catalysed reaction is NAD(+) + ATP = ADP + NADP(+) + H(+). Involved in the regulation of the intracellular balance of NAD and NADP, and is a key enzyme in the biosynthesis of NADP. Catalyzes specifically the phosphorylation on 2'-hydroxyl of the adenosine moiety of NAD to yield NADP. This is NAD kinase from Chloroherpeton thalassium (strain ATCC 35110 / GB-78).